Reading from the N-terminus, the 606-residue chain is Medium-chain acyl-CoA ligase ACSF2, mitochondrial (606 aa).

The N-terminal 13 residues, 1-13, are a transit peptide targeting the mitochondrion; that stretch reads MSSKILLTNLRTS. Residues 256–264, aspartate 484, arginine 499, and lysine 590 each bind ATP; that span reads TSGTTGKPK.

The protein belongs to the ATP-dependent AMP-binding enzyme family.

The protein resides in the mitochondrion. The enzyme catalyses a medium-chain fatty acid + ATP + CoA = a medium-chain fatty acyl-CoA + AMP + diphosphate. The catalysed reaction is octanoate + ATP + CoA = octanoyl-CoA + AMP + diphosphate. In terms of biological role, acyl-CoA synthases catalyze the initial reaction in fatty acid metabolism, by forming a thioester with CoA. Has some preference toward medium-chain substrates. Plays a role in adipocyte differentiation. In Danio rerio (Zebrafish), this protein is Medium-chain acyl-CoA ligase ACSF2, mitochondrial.